Reading from the N-terminus, the 199-residue chain is Ras-related and estrogen-regulated growth inhibitor (199 aa).

GTP-binding positions include 13-20 (GRAGVGKS), 60-64 (DTAGQ), and 118-121 (NKAD).

The protein belongs to the small GTPase superfamily. Ras family. In terms of tissue distribution, detected in heart, brain, placenta, lung, liver, skin, kidney and pancreas. Detected in estrogen receptor-positive breast-derived cell lines, but not in estrogen receptor-negative cell lines. Expression is decreased or lost in a significant proportion of primary breast tumors with poor clinical prognosis.

The protein resides in the cytoplasm. The enzyme catalyses GTP + H2O = GDP + phosphate + H(+). Functionally, binds GDP/GTP and possesses intrinsic GTPase activity. Has higher affinity for GDP than for GTP. In cell lines overexpression leads to a reduction in the rate of proliferation, colony formation and in tumorigenic potential. This is Ras-related and estrogen-regulated growth inhibitor (RERG) from Homo sapiens (Human).